Here is a 179-residue protein sequence, read N- to C-terminus: Phospholipase A2 (179 aa).

Residues 1 to 21 (MHALRSSVLALWLCLHVSVRA) form the signal peptide. A propeptide spanning residues 22–39 (WMTYRSANGLDEYEPEDR) is cleaved from the precursor. W47, G49, and G51 together coordinate Ca(2+). 5 cysteine pairs are disulfide-bonded: C48–C70, C69–C109, C76–C102, C100–C133, and C142–C150. H73 is a catalytic residue. Position 74 (D74) interacts with Ca(2+). Residue D103 is part of the active site.

The protein belongs to the phospholipase A2 family. Group III subfamily. Ca(2+) is required as a cofactor. As to expression, expressed by the venom gland.

The protein localises to the secreted. The enzyme catalyses a 1,2-diacyl-sn-glycero-3-phosphocholine + H2O = a 1-acyl-sn-glycero-3-phosphocholine + a fatty acid + H(+). Functionally, may potentiate Xylotoxin(1)-Xa1a DRG activation and cell lysis, since the orthologous A.mellifera PA2 potentiates Xylotoxin(1)-Xa1a DRG activation and cell lysis. In vivo, intraplantar injection in mice may potentiate spontaneous pain behaviors and paw swelling caused by Xylotoxin(1)-Xa1a, since the orthologous A.mellifera PA2 shows this effect. PLA2 catalyzes the calcium-dependent hydrolysis of the 2-acyl groups in 3-sn-phosphoglycerides. The chain is Phospholipase A2 from Xylocopa aruana (Great carpenter bee).